The sequence spans 47 residues: Defensin-2 (47 aa).

Disulfide bonds link Cys3-Cys47, Cys14-Cys35, Cys20-Cys41, and Cys24-Cys43.

It belongs to the DEFL family. Epidermis and vascular bundles of pods, stems, roots, leaves and wet or dry seeds.

In terms of biological role, possesses antifungal activity sensitive to inorganic cations. The sequence is that of Defensin-2 from Pisum sativum (Garden pea).